The following is a 477-amino-acid chain: Ribulose bisphosphate carboxylase large chain (477 aa).

Positions 1–2 (MS) are excised as a propeptide. Pro-3 is modified (N-acetylproline). Lys-14 bears the N6,N6,N6-trimethyllysine mark. Residues Asn-123 and Thr-173 each contribute to the substrate site. Lys-175 functions as the Proton acceptor in the catalytic mechanism. Lys-177 is a binding site for substrate. The Mg(2+) site is built by Lys-201, Asp-203, and Glu-204. N6-carboxylysine is present on Lys-201. The Proton acceptor role is filled by His-294. Substrate-binding residues include Arg-295, His-327, and Ser-379.

It belongs to the RuBisCO large chain family. Type I subfamily. Heterohexadecamer of 8 large chains and 8 small chains; disulfide-linked. The disulfide link is formed within the large subunit homodimers. It depends on Mg(2+) as a cofactor. The disulfide bond which can form in the large chain dimeric partners within the hexadecamer appears to be associated with oxidative stress and protein turnover.

It localises to the plastid. The protein localises to the chloroplast. The enzyme catalyses 2 (2R)-3-phosphoglycerate + 2 H(+) = D-ribulose 1,5-bisphosphate + CO2 + H2O. It carries out the reaction D-ribulose 1,5-bisphosphate + O2 = 2-phosphoglycolate + (2R)-3-phosphoglycerate + 2 H(+). RuBisCO catalyzes two reactions: the carboxylation of D-ribulose 1,5-bisphosphate, the primary event in carbon dioxide fixation, as well as the oxidative fragmentation of the pentose substrate in the photorespiration process. Both reactions occur simultaneously and in competition at the same active site. The sequence is that of Ribulose bisphosphate carboxylase large chain (rbcL) from Solanum lycopersicum (Tomato).